We begin with the raw amino-acid sequence, 252 residues long: MLGGLVTALRTLTILPIPGKDAVTFSHSLYWFPFVGLLLGALLAALGYVGSLSGWHEFAALLVVLGGIVLTRGMHADGLADVADGFWGGRSKEAALRIMKDPTVGSFGALALSGVMLLKWVAVVRLLSFGLFDVVMAGILLARLVQVLLASALPYARREAGTASAFVAGAGAPHAFSALLFTLALLFPFYTENFPTMLWLLGAALVAGSMVGMVSYRKIGGVTGDVLGAGSELTEVAVWITGALLLSDYLLF.

The next 6 membrane-spanning stretches (helical) occupy residues 29-49, 50-70, 104-124, 129-149, 166-186, and 194-214; these read LYWF…LGYV, GSLS…GIVL, VGSF…VAVV, FGLF…QVLL, FVAG…LALL, and FPTM…VGMV.

This sequence belongs to the CobS family. The cofactor is Mg(2+).

It is found in the cell inner membrane. The enzyme catalyses alpha-ribazole + adenosylcob(III)inamide-GDP = adenosylcob(III)alamin + GMP + H(+). It carries out the reaction alpha-ribazole 5'-phosphate + adenosylcob(III)inamide-GDP = adenosylcob(III)alamin 5'-phosphate + GMP + H(+). The protein operates within cofactor biosynthesis; adenosylcobalamin biosynthesis; adenosylcobalamin from cob(II)yrinate a,c-diamide: step 7/7. Its function is as follows. Joins adenosylcobinamide-GDP and alpha-ribazole to generate adenosylcobalamin (Ado-cobalamin). Also synthesizes adenosylcobalamin 5'-phosphate from adenosylcobinamide-GDP and alpha-ribazole 5'-phosphate. This chain is Adenosylcobinamide-GDP ribazoletransferase, found in Chlorobium chlorochromatii (strain CaD3).